The primary structure comprises 1429 residues: MEENTFGVQQIQPNVISVRLFKRKVGGLGFLVKERVSKPPVIISDLIRGGAAEQSGLIQAGDIILAVNDRPLVDLSYDSALEVLRGIASETHVVLILRGPEGFTTHLETTFTGDGTPKTIRVTQPLGPPTKAVDLSHQPSASKDQSLAVDRVTGLGNGPQHAQGHGQGAGSVSQANGVAIDPTMKSTKANLQDIGEHDELLKEIEPVLSILNSGSKATNRGGPAKAEMKDTGIQVDRDLDGKSHKAPPLGGDNDRVFNDLWGKDNVPVILNNPYSEKEQSPTSGKQSPTKNGSPSRCPRFLKVKNWETDVVLTDTLHLKSTLETGCTEHICMGSIMLPSQHTRKPEDVRTKDQLFPLAKEFLDQYYSSIKRFGSKAHMDRLEEVNKEIESTSTYQLKDTELIYGAKHAWRNASRCVGRIQWSKLQVFDARDCTTAHGMFNYICNHVKYATNKGNLRSAITIFPQRTDGKHDFRVWNSQLIRYAGYKQPDGSTLGDPANVQFTEICIQQGWKAPRGRFDVLPLLLQANGNDPELFQIPPELVLEVPIRHPKFDWFKDLGLKWYGLPAVSNMLLEIGGLEFSACPFSGWYMGTEIGVRDYCDNSRYNILEEVAKKMDLDMRKTSSLWKDQALVEINIAVLYSFQSDKVTIVDHHSATESFIKHMENEYRCRGGCPADWVWIVPPMSGSITPVFHQEMLNYRLTPSFEYQPDPWNTHVWKGTNGTPTKRRAIGFKKLAEAVKFSAKLMGQAMAKRVKATILYATETGKSQAYAKTLCEIFKHAFDAKAMSMEEYDIVHLEHEALVLVVTSTFGNGDPPENGEKFGCALMEMRHPNSVQEERKSYKVRFNSVSSYSDSRKSSGDGPDLRDNFESTGPLANVRFSVFGLGSRAYPHFCAFGHAVDTLLEELGGERILKMREGDELCGQEEAFRTWAKKVFKAACDVFCVGDDVNIEKPNNSLISNDRSWKRNKFRLTYVAEAPDLTQGLSNVHKKRVSAARLLSRQNLQSPKFSRSTIFVRLHTNGNQELQYQPGDHLGVFPGNHEDLVNALIERLEDAPPANHVVKVEMLEERNTALGVISNWKDESRLPPCTIFQAFKYYLDITTPPTPLQLQQFASLATNEKEKQRLLVLSKGLQEYEEWKWGKNPTMVEVLEEFPSIQMPATLLLTQLSLLQPRYYSISSSPDMYPDEVHLTVAIVSYHTRDGEGPVHHGVCSSWLNRIQADDVVPCFVRGAPSFHLPRNPQVPCILVGPGTGIAPFRSFWQQRQFDIQHKGMNPCPMVLVFGCRQSKIDHIYREETLQAKNKGVFRELYTAYSREPDRPKKYVQDVLQEQLAESVYRALKEQGGHIYVCGDVTMAADVLKAIQRIMTQQGKLSEEDAGVFISRLRDDNRYHEDIFGVTLRTYEVTNRLRSESIAFIEESKKDADEVFSS.

Residues 1 to 200 (MEENTFGVQQ…LQDIGEHDEL (200 aa)) are interaction with NOSIP. One can recognise a PDZ domain in the interval 17 to 99 (SVRLFKRKVG…ETHVVLILRG (83 aa)). 3 disordered regions span residues 152–174 (VTGL…SVSQ), 214–255 (GSKA…DNDR), and 271–298 (NNPY…SRCP). A compositionally biased stretch (low complexity) spans 160–174 (QHAQGHGQGAGSVSQ). The segment at 163–240 (QGHGQGAGSV…TGIQVDRDLD (78 aa)) is interaction with DYNLL1/PIN. Positions 226–243 (AEMKDTGIQVDRDLDGKS) are enriched in basic and acidic residues. At Ser280 the chain carries Phosphoserine. Over residues 280–294 (SPTSGKQSPTKNGSP) the composition is skewed to polar residues. Ser334 contacts (6R)-L-erythro-5,6,7,8-tetrahydrobiopterin. Cys415 contacts heme b. Gln478, Trp587, Tyr588, and Glu592 together coordinate L-arginine. The (6R)-L-erythro-5,6,7,8-tetrahydrobiopterin site is built by Val677, Trp678, and Phe691. Tyr706 contacts heme b. The tract at residues 725–745 (KRRAIGFKKLAEAVKFSAKLM) is calmodulin-binding. The 181-residue stretch at 755–935 (ATILYATETG…AFRTWAKKVF (181 aa)) folds into the Flavodoxin-like domain. FMN contacts are provided by Thr761, Glu762, Thr763, Lys765, Ser766, Ser807, Thr808, and Gly812. A phosphoserine mark is found at Ser847, Ser857, and Ser858. The FMN site is built by Ser886, His891, Cys893, Glu919, and Gln923. The region spanning 990-1237 (KRVSAARLLS…VRGAPSFHLP (248 aa)) is the FAD-binding FR-type domain. Arg1010 serves as a coordination point for NADP(+). Residues His1032, Arg1173, Tyr1174, Tyr1175, Ser1176, Thr1191, and Ala1193 each coordinate FAD. Residue Ser1196 participates in NADP(+) binding. Residues Tyr1197, Val1210, Cys1211, and Ser1212 each coordinate FAD. 10 residues coordinate NADP(+): Thr1251, Arg1284, Ser1313, Arg1314, Lys1320, Tyr1322, Gln1324, Asp1357, Thr1398, and Arg1400.

It belongs to the NOS family. In terms of assembly, homodimer. Interacts with DLG4 (via N-terminal tandem pair of PDZ domains); the interaction possibly being prevented by the association between NOS1 and CAPON. Forms a ternary complex with CAPON and RASD1. Forms a ternary complex with CAPON and SYN1. Interacts with ZDHHC23. Interacts with NOSIP; which may impair its synaptic location. Interacts with HTR4. Interacts with SLC6A4. Interacts with VAC14. Forms a complex with ASL, ASS1 and SLC7A1; the complex regulates cell-autonomous L-arginine synthesis and citrulline recycling while channeling extracellular L-arginine to nitric oxide synthesis pathway. Interacts with DMD; localizes NOS1 to sarcolemma in muscle cells. Interacts with DYNLL1; inhibits the nitric oxide synthase activity. Heme b is required as a cofactor. Requires FAD as cofactor. The cofactor is FMN. It depends on (6R)-L-erythro-5,6,7,8-tetrahydrobiopterin as a cofactor. In terms of processing, ubiquitinated; mediated by STUB1/CHIP in the presence of Hsp70 and Hsp40 (in vitro). As to expression, isoform N-NOS-1 is expressed in brain and colorectum. Found in the Auerbach's plexus of the enteric nervous system. Isoform PNNOS is expressed in the penis, urethra, prostate, and skeletal muscle, and coexists with the cerebellar nnos in the pelvic plexus, bladder and liver, and is detectable in the cerebellum.

Its subcellular location is the cell membrane. It is found in the sarcolemma. It localises to the cell projection. The protein resides in the dendritic spine. The enzyme catalyses 2 L-arginine + 3 NADPH + 4 O2 + H(+) = 2 L-citrulline + 2 nitric oxide + 3 NADP(+) + 4 H2O. Its activity is regulated as follows. Stimulated by calcium/calmodulin. Inhibited by DYNLL1 that prevents the dimerization of the protein. Inhibited by NOSIP. Its function is as follows. Produces nitric oxide (NO) which is a messenger molecule with diverse functions throughout the body. In the brain and peripheral nervous system, NO displays many properties of a neurotransmitter. Inhibitory transmitter for non-adrenergic and non-cholinergic nerves in the colorectum. Probably has nitrosylase activity and mediates cysteine S-nitrosylation of cytoplasmic target proteins such SRR. Inhibitory transmitter for non-adrenergic and non-cholinergic nerves in the colorectum. This chain is Nitric oxide synthase 1, found in Rattus norvegicus (Rat).